Reading from the N-terminus, the 210-residue chain is T-cell surface glycoprotein CD8 beta chain (210 aa).

A signal peptide spans methionine 1–valine 21. The Ig-like V-type domain maps to leucine 22–leucine 132. At leucine 22–leucine 170 the chain is on the extracellular side. Cysteine 41 and cysteine 116 are joined by a disulfide. Asparagine 102 carries an N-linked (GlcNAc...) asparagine glycan. Residues proline 139–valine 161 form a disordered region. Residues leucine 171–isoleucine 191 form a helical membrane-spanning segment. Residues histidine 192–lysine 210 are Cytoplasmic-facing.

Forms disulfide-linked heterodimers with CD8A at the cell surface. Interacts with CD3D; this interaction couples TCR-CD3 with CD8. Interacts with LCK. In terms of processing, phosphorylated as a consequence of T-cell activation. Post-translationally, palmitoylated at the cytoplasmic tail and thereby targets the heterodimer CD8A/CD8B to lipid rafts unlike CD8A homodimers.

The protein resides in the cell membrane. Functionally, integral membrane glycoprotein that plays an essential role in the immune response and serves multiple functions in responses against both external and internal offenses. In T-cells, functions primarily as a coreceptor for MHC class I molecule:peptide complex. The antigens presented by class I peptides are derived from cytosolic proteins while class II derived from extracellular proteins. Interacts simultaneously with the T-cell receptor (TCR) and the MHC class I proteins presented by antigen presenting cells (APCs). In turn, recruits the Src kinase LCK to the vicinity of the TCR-CD3 complex. A palmitoylation site in the cytoplasmic tail of CD8B chain contributes to partitioning of CD8 into the plasma membrane lipid rafts where signaling proteins are enriched. Once LCK recruited, it initiates different intracellular signaling pathways by phosphorylating various substrates ultimately leading to lymphokine production, motility, adhesion and activation of cytotoxic T-lymphocytes (CTLs). Additionally, plays a critical role in thymic selection of CD8+ T-cells. This Felis catus (Cat) protein is T-cell surface glycoprotein CD8 beta chain (CD8B).